A 328-amino-acid polypeptide reads, in one-letter code: NADH-cytochrome b5 reductase-like protein (328 aa).

The FAD-binding FR-type domain occupies 76–184; the sequence is DKWLEFKLQD…KGPVEKFKYS (109 aa). Thr-201 bears the Phosphothreonine mark.

This sequence belongs to the flavoprotein pyridine nucleotide cytochrome reductase family. It depends on FAD as a cofactor.

Its subcellular location is the mitochondrion. The enzyme catalyses 2 Fe(III)-[cytochrome b5] + NADH = 2 Fe(II)-[cytochrome b5] + NAD(+) + H(+). Its function is as follows. Desaturation and elongation of fatty acids. This Arabidopsis thaliana (Mouse-ear cress) protein is NADH-cytochrome b5 reductase-like protein (CBR2).